A 611-amino-acid polypeptide reads, in one-letter code: Leucine aminopeptidase 2 (611 aa).

A peptide contacts are provided by residues 135-137 (QCQ) and 265-270 (PYGGME). His294 serves as a coordination point for Zn(2+). Glu295 (proton acceptor) is an active-site residue. Positions 298 and 317 each coordinate Zn(2+). Tyr383 functions as the Proton donor in the catalytic mechanism.

The protein belongs to the peptidase M1 family. The cofactor is Zn(2+).

Its subcellular location is the cytoplasm. The protein resides in the nucleus. It catalyses the reaction an epoxide + H2O = an ethanediol. In terms of biological role, aminopeptidase that preferentially cleaves di- and tripeptides. Also has low epoxide hydrolase activity (in vitro). Can hydrolyze the epoxide leukotriene LTA(4) but it forms preferentially 5,6-dihydroxy-7,9,11,14-eicosatetraenoic acid rather than the cytokine leukotriene B(4) as the product compared to the homologous mammalian enzyme (in vitro). The chain is Leucine aminopeptidase 2 from Chaetomium globosum (strain ATCC 6205 / CBS 148.51 / DSM 1962 / NBRC 6347 / NRRL 1970) (Soil fungus).